A 150-amino-acid chain; its full sequence is Monothiol glutaredoxin-S13 (150 aa).

The disordered stretch occupies residues 30–52 (PSSSSSSLSWLTSGSPKPTSISN). Low complexity predominate over residues 31 to 44 (SSSSSSLSWLTSGS). Residues 53–149 (KRSSNLVVME…PTLRQAGALW (97 aa)) form the Glutaredoxin domain. Position 73 (Cys73) interacts with [2Fe-2S] cluster. The Responsive for interaction with TGA factors signature appears at 147-150 (ALWL).

This sequence belongs to the glutaredoxin family. CC-type subfamily.

The protein resides in the cytoplasm. It localises to the nucleus. In terms of biological role, may only reduce GSH-thiol disulfides, but not protein disulfides. This Arabidopsis thaliana (Mouse-ear cress) protein is Monothiol glutaredoxin-S13 (GRXS13).